A 266-amino-acid polypeptide reads, in one-letter code: Indole-3-glycerol phosphate synthase (266 aa).

Belongs to the TrpC family.

The enzyme catalyses 1-(2-carboxyphenylamino)-1-deoxy-D-ribulose 5-phosphate + H(+) = (1S,2R)-1-C-(indol-3-yl)glycerol 3-phosphate + CO2 + H2O. The protein operates within amino-acid biosynthesis; L-tryptophan biosynthesis; L-tryptophan from chorismate: step 4/5. This is Indole-3-glycerol phosphate synthase from Janthinobacterium sp. (strain Marseille) (Minibacterium massiliensis).